A 287-amino-acid polypeptide reads, in one-letter code: Glutamate racemase (287 aa).

The span at 1–15 shows a compositional bias: polar residues; that stretch reads MATKPQDANTTSREA. Residues 1 to 25 form a disordered region; that stretch reads MATKPQDANTTSREAITSKADSPPR. Substrate is bound by residues 32-33 and 64-65; these read DS and YG. The active-site Proton donor/acceptor is the Cys96. 97–98 lines the substrate pocket; sequence NT. The Proton donor/acceptor role is filled by Cys208. 209–210 is a substrate binding site; it reads TH.

This sequence belongs to the aspartate/glutamate racemases family.

It catalyses the reaction L-glutamate = D-glutamate. The protein operates within cell wall biogenesis; peptidoglycan biosynthesis. Provides the (R)-glutamate required for cell wall biosynthesis. The protein is Glutamate racemase of Yersinia pseudotuberculosis serotype O:3 (strain YPIII).